The sequence spans 320 residues: NAD kinase (320 aa).

The Proton acceptor role is filled by D96. NAD(+)-binding positions include 96 to 97 (DG), R101, 170 to 171 (NE), D200, and 211 to 216 (TAYAFS).

Belongs to the NAD kinase family. It depends on a divalent metal cation as a cofactor.

The protein localises to the cytoplasm. The enzyme catalyses NAD(+) + ATP = ADP + NADP(+) + H(+). Its function is as follows. Involved in the regulation of the intracellular balance of NAD and NADP, and is a key enzyme in the biosynthesis of NADP. Catalyzes specifically the phosphorylation on 2'-hydroxyl of the adenosine moiety of NAD to yield NADP. The chain is NAD kinase from Rhodococcus opacus (strain B4).